The sequence spans 276 residues: Elongation factor Ts (276 aa).

The tract at residues 80 to 83 (TDFV) is involved in Mg(2+) ion dislocation from EF-Tu.

The protein belongs to the EF-Ts family.

The protein resides in the cytoplasm. Associates with the EF-Tu.GDP complex and induces the exchange of GDP to GTP. It remains bound to the aminoacyl-tRNA.EF-Tu.GTP complex up to the GTP hydrolysis stage on the ribosome. The sequence is that of Elongation factor Ts from Kocuria rhizophila (strain ATCC 9341 / DSM 348 / NBRC 103217 / DC2201).